A 285-amino-acid polypeptide reads, in one-letter code: Bark agglutinin I polypeptide A (285 aa).

An N-terminal signal peptide occupies residues 1–31 (MTSYNFKTQTSFPLLLSISFFFLLLLNKVNS). N147 carries N-linked (GlcNAc...) asparagine glycosylation. Residues E156 and D158 each contribute to the Mn(2+) site. Residues D158, F160, N162, and D166 each coordinate Ca(2+). Mn(2+) is bound by residues D166 and H171. A glycan (N-linked (GlcNAc...) asparagine) is linked at N188.

Belongs to the leguminous lectin family. In terms of assembly, RPbAI is composed of two polypeptides, A and B, that associate into five different tetrameric isolectins. The A4 combination is the only one devoid of agglutination activity. Isoform B4 displays maximal agglutination activity. As to expression, strong expression in seed. Lower levels in the flower, and the bark of the roots. No expression in leaf. The lectin accumulates in the inner bark in autumn.

In terms of biological role, N-acetyl-D-galactosamine specific lectin. Bark lectins are storage protein that probably maintains stocks of nitrogen during dormant period. Self-aggregatable molecules that can bind their own carbohydrate side chains. They could also play a role in the plant's defense against phytophagous invertebrates or herbivorous higher animals. This is Bark agglutinin I polypeptide A from Robinia pseudoacacia (Black locust).